A 324-amino-acid chain; its full sequence is COP9 signalosome complex subunit 6 (324 aa).

The region spanning 38 to 171 (VALHPLVILN…VSVFESVIDI (134 aa)) is the MPN domain.

Belongs to the peptidase M67A family. CSN6 subfamily. In terms of assembly, component of the CSN complex, composed of COPS1/GPS1, COPS2, COPS3, COPS4, COPS5, COPS6, COPS7 (COPS7A or COPS7B), COPS8 and COPS9. In the complex, it probably interacts directly with COPS2, COPS4, COPS5, COPS7 (COPS7A or COPS7B) and COPS9. Interacts with the translation initiation factor EIF3S6. Interacts weakly with RBX1. Directly interacts with COP1 and 14-3-3 protein sigma/SFN. Interacts with ERCC6.

The protein localises to the cytoplasm. The protein resides in the nucleus. Its function is as follows. Component of the COP9 signalosome complex (CSN), a complex involved in various cellular and developmental processes. The CSN complex is an essential regulator of the ubiquitin (Ubl) conjugation pathway by mediating the deneddylation of the cullin subunits of SCF-type E3 ligase complexes, leading to decrease the Ubl ligase activity of SCF-type complexes such as SCF, CSA or DDB2. The complex is also involved in phosphorylation of p53/TP53, c-jun/JUN, IkappaBalpha/NFKBIA, ITPK1 and IRF8, possibly via its association with CK2 and PKD kinases. CSN-dependent phosphorylation of TP53 and JUN promotes and protects degradation by the Ubl system, respectively. Has some glucocorticoid receptor-responsive activity. Stabilizes COP1 through reducing COP1 auto-ubiquitination and decelerating COP1 turnover rate, hence regulates the ubiquitination of COP1 targets, including SFN. This Mus musculus (Mouse) protein is COP9 signalosome complex subunit 6 (Cops6).